The sequence spans 480 residues: Glycogen synthase 1 (480 aa).

ADP-alpha-D-glucose is bound at residue Lys15.

It belongs to the glycosyltransferase 1 family. Bacterial/plant glycogen synthase subfamily.

The catalysed reaction is [(1-&gt;4)-alpha-D-glucosyl](n) + ADP-alpha-D-glucose = [(1-&gt;4)-alpha-D-glucosyl](n+1) + ADP + H(+). Its pathway is glycan biosynthesis; glycogen biosynthesis. Its function is as follows. Synthesizes alpha-1,4-glucan chains using ADP-glucose. This is Glycogen synthase 1 (glgA1) from Rhizobium radiobacter (Agrobacterium tumefaciens).